The sequence spans 140 residues: Phosphopantetheine adenylyltransferase (140 aa).

Ser9 contacts substrate. ATP is bound by residues 9–10 and His17; that span reads SF. Positions 41, 74, and 88 each coordinate substrate. Residues 89–91, Glu99, and 124–130 each bind ATP; these read GLR and KRSLSST.

Belongs to the bacterial CoaD family. In terms of assembly, homohexamer. It depends on Mg(2+) as a cofactor.

The protein resides in the cytoplasm. The catalysed reaction is (R)-4'-phosphopantetheine + ATP + H(+) = 3'-dephospho-CoA + diphosphate. It participates in cofactor biosynthesis; coenzyme A biosynthesis; CoA from (R)-pantothenate: step 4/5. Its function is as follows. Reversibly transfers an adenylyl group from ATP to 4'-phosphopantetheine, yielding dephospho-CoA (dPCoA) and pyrophosphate. The protein is Phosphopantetheine adenylyltransferase of Mycoplasma mycoides subsp. mycoides SC (strain CCUG 32753 / NCTC 10114 / PG1).